The sequence spans 24 residues: Large ribosomal subunit protein uL30 (24 aa).

It belongs to the universal ribosomal protein uL30 family. Part of the 50S ribosomal subunit.

In Ectopseudomonas mendocina (Pseudomonas mendocina), this protein is Large ribosomal subunit protein uL30 (rpmD).